Consider the following 342-residue polypeptide: tRNA N6-adenosine threonylcarbamoyltransferase (342 aa).

Fe cation-binding residues include H111 and H115. Residues L134–G138, D167, G180, and N272 each bind substrate. D300 contributes to the Fe cation binding site.

Belongs to the KAE1 / TsaD family. It depends on Fe(2+) as a cofactor.

Its subcellular location is the cytoplasm. It catalyses the reaction L-threonylcarbamoyladenylate + adenosine(37) in tRNA = N(6)-L-threonylcarbamoyladenosine(37) in tRNA + AMP + H(+). In terms of biological role, required for the formation of a threonylcarbamoyl group on adenosine at position 37 (t(6)A37) in tRNAs that read codons beginning with adenine. Is involved in the transfer of the threonylcarbamoyl moiety of threonylcarbamoyl-AMP (TC-AMP) to the N6 group of A37, together with TsaE and TsaB. TsaD likely plays a direct catalytic role in this reaction. This is tRNA N6-adenosine threonylcarbamoyltransferase from Aromatoleum aromaticum (strain DSM 19018 / LMG 30748 / EbN1) (Azoarcus sp. (strain EbN1)).